The sequence spans 319 residues: Ataxin-3 homolog (319 aa).

Positions 8–179 constitute a Josephin domain; that stretch reads ISSIFFERQQ…NSEADDFITL (172 aa). The active-site Nucleophile is Cys-21. His-118 functions as the Proton acceptor in the catalytic mechanism. The active site involves Asn-133. UIM domains lie at 218–237 and 242–261; these read QEDR…KESS and SDED…DPNI. The tract at residues 253–319 is disordered; sequence MSLSQDPNIP…EKKSQNVPEE (67 aa). The span at 254–267 shows a compositional bias: polar residues; that stretch reads SLSQDPNIPSTSAA. Residues 295-313 are compositionally biased toward basic and acidic residues; sequence QQRRDRAKFLEKLEEEKKS. Residues 297-300 form an interaction with cdc-48.1 and cdc-48.2 region; it reads RRDR.

As to quaternary structure, forms a complex composed of deubiquitinating enzyme atx-3, adapter ubxn-5 and cdc-48.1. Forms a complex composed of deubiquitinating enzyme atx-3, E4 ubiquitin-protein ligase ufd-2 and cdc-48.1. Interacts (via RRDR motif) with cdc-48.1 (via N-terminus) and cdc-48.2 (via N-terminus); the interaction with cdc-48.1 is not required for atx-3 enzymatic activity. Interacts (via C-terminus) with ubxn-5. May interact with ned-8.

The protein resides in the cytoplasm. It localises to the nucleus. Its subcellular location is the nucleolus. The enzyme catalyses Thiol-dependent hydrolysis of ester, thioester, amide, peptide and isopeptide bonds formed by the C-terminal Gly of ubiquitin (a 76-residue protein attached to proteins as an intracellular targeting signal).. Acts as a chain editing deubiquitinating enzyme that binds and cleaves 'Lys-48'-linked polyubiquitin chains, with a preference for chains containing four or more ubiquitin molecules thereby modulating protein degradation by the ubiquitin-proteasome pathway. Probably by regulating the IGF-1-insulin-like pathway, regulates lifespan. Regulates germline DNA double-strand-break repair and apoptosis in response to DNA damage by recruiting E4 ubiquitin-protein ligase ufd-2 to DNA repair foci. Interacts with key regulators of transcription and represses transcription. Acts as a histone-binding protein that regulates transcription. The sequence is that of Ataxin-3 homolog from Caenorhabditis briggsae.